Reading from the N-terminus, the 331-residue chain is Porphobilinogen deaminase (331 aa).

Cysteine 248 carries the S-(dipyrrolylmethanemethyl)cysteine modification. The tract at residues 307 to 331 is disordered; it reads QLLQAPKQTGEPHDPDRHDKGTGRP. Over residues 316-331 the composition is skewed to basic and acidic residues; that stretch reads GEPHDPDRHDKGTGRP.

It belongs to the HMBS family. As to quaternary structure, monomer. Dipyrromethane serves as cofactor.

It catalyses the reaction 4 porphobilinogen + H2O = hydroxymethylbilane + 4 NH4(+). It participates in porphyrin-containing compound metabolism; protoporphyrin-IX biosynthesis; coproporphyrinogen-III from 5-aminolevulinate: step 2/4. In terms of biological role, tetrapolymerization of the monopyrrole PBG into the hydroxymethylbilane pre-uroporphyrinogen in several discrete steps. This is Porphobilinogen deaminase from Acidothermus cellulolyticus (strain ATCC 43068 / DSM 8971 / 11B).